We begin with the raw amino-acid sequence, 146 residues long: Catabolic 3-dehydroquinase (146 aa).

Residue Y24 is the Proton acceptor of the active site. N78, H84, and D91 together coordinate substrate. H104 serves as the catalytic Proton donor. Substrate is bound by residues 105–106 (IT) and R115.

This sequence belongs to the type-II 3-dehydroquinase family. In terms of assembly, homododecamer. Adopts a ring-like structure, composed of an arrangement of two hexameric rings stacked on top of one another.

The catalysed reaction is 3-dehydroquinate = 3-dehydroshikimate + H2O. Its pathway is aromatic compound metabolism; 3,4-dihydroxybenzoate biosynthesis; 3,4-dihydroxybenzoate from 3-dehydroquinate: step 1/2. In terms of biological role, is involved in the catabolism of quinate. Allows the utilization of quinate as carbon source via the beta-ketoadipate pathway. The polypeptide is Catabolic 3-dehydroquinase (Candida dubliniensis (strain CD36 / ATCC MYA-646 / CBS 7987 / NCPF 3949 / NRRL Y-17841) (Yeast)).